The following is a 199-amino-acid chain: ATP-dependent Clp protease proteolytic subunit 2 (199 aa).

The active-site Nucleophile is the Ser-95. His-120 is a catalytic residue.

This sequence belongs to the peptidase S14 family. As to quaternary structure, fourteen ClpP subunits assemble into 2 heptameric rings which stack back to back to give a disk-like structure with a central cavity, resembling the structure of eukaryotic proteasomes.

Its subcellular location is the cytoplasm. It catalyses the reaction Hydrolysis of proteins to small peptides in the presence of ATP and magnesium. alpha-casein is the usual test substrate. In the absence of ATP, only oligopeptides shorter than five residues are hydrolyzed (such as succinyl-Leu-Tyr-|-NHMec, and Leu-Tyr-Leu-|-Tyr-Trp, in which cleavage of the -Tyr-|-Leu- and -Tyr-|-Trp bonds also occurs).. Functionally, cleaves peptides in various proteins in a process that requires ATP hydrolysis. Has a chymotrypsin-like activity. Plays a major role in the degradation of misfolded proteins. In Mycolicibacterium paratuberculosis (strain ATCC BAA-968 / K-10) (Mycobacterium paratuberculosis), this protein is ATP-dependent Clp protease proteolytic subunit 2.